Consider the following 99-residue polypeptide: Defensin-A4 (99 aa).

Residues 1–21 (MKTLCLLFAVLCLVTWTQARG) form the signal peptide. The propeptide occupies 22–68 (AEVEENLTAQDGEVDIAGDNGDVQLTLNTDDFESFTLKTLTLGHPRV). 3 cysteine pairs are disulfide-bonded: Cys73–Cys97, Cys75–Cys89, and Cys79–Cys96.

The protein belongs to the alpha-defensin family. Lowly expressed in spleen, and expressed at lower levels in kidney and lung.

Its subcellular location is the secreted. In terms of biological role, has antimicrobial activity. In Ornithorhynchus anatinus (Duckbill platypus), this protein is Defensin-A4.